Consider the following 334-residue polypeptide: S-adenosylmethionine:tRNA ribosyltransferase-isomerase (334 aa).

The protein belongs to the QueA family. As to quaternary structure, monomer.

The protein localises to the cytoplasm. The catalysed reaction is 7-aminomethyl-7-carbaguanosine(34) in tRNA + S-adenosyl-L-methionine = epoxyqueuosine(34) in tRNA + adenine + L-methionine + 2 H(+). It functions in the pathway tRNA modification; tRNA-queuosine biosynthesis. Functionally, transfers and isomerizes the ribose moiety from AdoMet to the 7-aminomethyl group of 7-deazaguanine (preQ1-tRNA) to give epoxyqueuosine (oQ-tRNA). In Thermosipho melanesiensis (strain DSM 12029 / CIP 104789 / BI429), this protein is S-adenosylmethionine:tRNA ribosyltransferase-isomerase.